Here is a 274-residue protein sequence, read N- to C-terminus: Penicillin-insensitive murein endopeptidase (274 aa).

The N-terminal stretch at 1–19 is a signal peptide; that stretch reads MNKTAIALLALLASSASLA. Intrachain disulfides connect cysteine 44–cysteine 265, cysteine 187–cysteine 235, and cysteine 216–cysteine 223. Residues histidine 110, histidine 113, aspartate 120, aspartate 147, histidine 150, and histidine 211 each contribute to the Zn(2+) site. The tract at residues 227 to 274 is disordered; it reads PLPPPGDGCGAELQSWFEPPKPGTTKPEKKTPPPLPPSCQALLDEHVI.

The protein belongs to the peptidase M74 family. Dimer. Zn(2+) is required as a cofactor.

The protein localises to the periplasm. Functionally, murein endopeptidase that cleaves the D-alanyl-meso-2,6-diamino-pimelyl amide bond that connects peptidoglycan strands. Likely plays a role in the removal of murein from the sacculus. The sequence is that of Penicillin-insensitive murein endopeptidase from Escherichia coli (strain ATCC 8739 / DSM 1576 / NBRC 3972 / NCIMB 8545 / WDCM 00012 / Crooks).